The primary structure comprises 526 residues: Chaperonin GroEL, chloroplastic (526 aa).

ATP contacts are provided by residues 29–32 (TLGP), 86–90 (DGTTT), glycine 412, 476–478 (DAA), and aspartate 492.

This sequence belongs to the chaperonin (HSP60) family. Forms a cylinder of 14 subunits composed of two heptameric rings stacked back-to-back. Interacts with the co-chaperonin GroES.

Its subcellular location is the plastid. It is found in the chloroplast. It carries out the reaction ATP + H2O + a folded polypeptide = ADP + phosphate + an unfolded polypeptide.. Together with its co-chaperonin GroES, plays an essential role in assisting protein folding. The GroEL-GroES system forms a nano-cage that allows encapsulation of the non-native substrate proteins and provides a physical environment optimized to promote and accelerate protein folding. This is Chaperonin GroEL, chloroplastic from Cyanidioschyzon merolae (strain NIES-3377 / 10D) (Unicellular red alga).